The following is a 1128-amino-acid chain: Membrane-associated guanylate kinase, WW and PDZ domain-containing protein 3 (1128 aa).

The 87-residue stretch at 22–108 (WGGPAGPDPE…PVRLKTVRPG (87 aa)) folds into the PDZ 1 domain. The 175-residue stretch at 116 to 290 (RHYLSLQFQK…SMDFRNYMSR (175 aa)) folds into the Guanylate kinase-like domain. Residue 123–130 (FQKGSIDH) participates in ATP binding. Positions 184–276 (TYDGNFYGTP…DWMKPVPSYN (93 aa)) are disordered. The segment covering 193 to 204 (PKPPAEPSPFQP) has biased composition (pro residues). Positions 238 to 247 (LPEDEEEEEK) are enriched in acidic residues. Residues 257 to 267 (ENKEKHSDSSD) show a composition bias toward basic and acidic residues. WW domains follow at residues 295–328 (EPLP…DPRL) and 341–374 (GELP…NPVL). 2 PDZ domains span residues 412 to 494 (RTSL…TLCR) and 581 to 657 (TIPL…LILR). Positions 658–688 (GGPPSPTKTGKMKDKQESSGSLEALSDAIPQ) are disordered. PDZ domains lie at 728 to 810 (DVFL…TVRR) and 852 to 939 (DVCL…VAEE). 2 disordered regions span residues 939 to 985 (EEHR…GKEV) and 999 to 1018 (LAQP…SQAQ). Polar residues-rich tracts occupy residues 946-956 (SGTNSAKQSPA) and 965-974 (AQSSASSTDR). The PDZ 6 domain maps to 1024–1106 (PVELERGPRG…KVLLLLRPGT (83 aa)).

This sequence belongs to the MAGUK family.

The protein localises to the cell membrane. The protein resides in the cell junction. Its subcellular location is the tight junction. Its function is as follows. Acts as a scaffolding protein at cell-cell junctions, thereby regulating various cellular and signaling processes. The chain is Membrane-associated guanylate kinase, WW and PDZ domain-containing protein 3 (MAGI3) from Gallus gallus (Chicken).